We begin with the raw amino-acid sequence, 207 residues long: Large ribosomal subunit protein uL4 (207 aa).

Residues 44–81 (KRQGTQSAKTRSEVRGGGRKPWRQKGTGRARQGSIRSP) form a disordered region. A compositionally biased stretch (basic residues) spans 60–71 (GGRKPWRQKGTG).

Belongs to the universal ribosomal protein uL4 family. Part of the 50S ribosomal subunit.

In terms of biological role, one of the primary rRNA binding proteins, this protein initially binds near the 5'-end of the 23S rRNA. It is important during the early stages of 50S assembly. It makes multiple contacts with different domains of the 23S rRNA in the assembled 50S subunit and ribosome. Forms part of the polypeptide exit tunnel. The sequence is that of Large ribosomal subunit protein uL4 from Finegoldia magna (strain ATCC 29328 / DSM 20472 / WAL 2508) (Peptostreptococcus magnus).